Here is a 110-residue protein sequence, read N- to C-terminus: Small ribosomal subunit protein bS16 (110 aa).

Residues 84-110 (KRAPRNNPEKAVPRKERKAAAEAAAKA) are disordered. The span at 90–103 (NPEKAVPRKERKAA) shows a compositional bias: basic and acidic residues.

This sequence belongs to the bacterial ribosomal protein bS16 family.

The polypeptide is Small ribosomal subunit protein bS16 (Afipia carboxidovorans (strain ATCC 49405 / DSM 1227 / KCTC 32145 / OM5) (Oligotropha carboxidovorans)).